The primary structure comprises 307 residues: tRNA pseudouridine synthase B (307 aa).

The active-site Nucleophile is D38.

This sequence belongs to the pseudouridine synthase TruB family. Type 1 subfamily.

The catalysed reaction is uridine(55) in tRNA = pseudouridine(55) in tRNA. Responsible for synthesis of pseudouridine from uracil-55 in the psi GC loop of transfer RNAs. The polypeptide is tRNA pseudouridine synthase B (Bacillus anthracis).